A 1392-amino-acid polypeptide reads, in one-letter code: DNA-directed RNA polymerase subunit beta'' (1392 aa).

Positions 224, 295, 302, and 305 each coordinate Zn(2+).

It belongs to the RNA polymerase beta' chain family. RpoC2 subfamily. In plastids the minimal PEP RNA polymerase catalytic core is composed of four subunits: alpha, beta, beta', and beta''. When a (nuclear-encoded) sigma factor is associated with the core the holoenzyme is formed, which can initiate transcription. Requires Zn(2+) as cofactor.

The protein localises to the plastid. It is found in the chloroplast. The enzyme catalyses RNA(n) + a ribonucleoside 5'-triphosphate = RNA(n+1) + diphosphate. Its function is as follows. DNA-dependent RNA polymerase catalyzes the transcription of DNA into RNA using the four ribonucleoside triphosphates as substrates. This Nicotiana tomentosiformis (Tobacco) protein is DNA-directed RNA polymerase subunit beta''.